The sequence spans 649 residues: Centrosomal protein of 63 kDa-A (649 aa).

Coiled-coil stretches lie at residues 19–185 (DSCE…YQHQ) and 222–556 (EEEL…DAAS). Ser560 is modified (phosphoserine; by atm and atr). The stretch at 612 to 645 (FLQEEEQRSHELLQRLNAHIEELKQESQRTVEHF) forms a coiled coil.

Belongs to the CEP63 family. In terms of processing, phosphorylation at Ser-560 by atm and atr promotes its delocalization from the centrosome and impairs its ability to promote centrosome dependent spindle assembly.

Its subcellular location is the cytoplasm. The protein localises to the cytoskeleton. The protein resides in the microtubule organizing center. It localises to the centrosome. It is found in the centriole. Functionally, required for normal spindle assembly. Plays a key role in mother-centriole-dependent centriole duplication. Plays a role in DNA damage response. Following DNA damage, such as double-strand breaks (DSBs), is removed from centrosomes; this leads to the inactivation of spindle assembly and delay in mitotic progression. The polypeptide is Centrosomal protein of 63 kDa-A (cep63-a) (Xenopus laevis (African clawed frog)).